The following is a 255-amino-acid chain: U2 small nuclear ribonucleoprotein A' (255 aa).

LRR repeat units follow at residues 20–41 (RDRELDLRGYKIPVIENLGATL), 43–64 (QFDAIDFSDNEIRKLDGFPLLR), 65–86 (RLKTLLVNNNRICRIGEGLDQA), and 89–110 (CLTELILTNNSLVELGDLDPLA). Positions 123-161 (NPVTNKKHYRLYVIYKVPQVRVLDFQKVKLKERQEAEKM) constitute an LRRCT domain. Lys-172 is modified (N6-acetyllysine; alternate). Lys-172 participates in a covalent cross-link: Glycyl lysine isopeptide (Lys-Gly) (interchain with G-Cter in SUMO2); alternate. Ser-178 and Ser-197 each carry phosphoserine. Positions 179–199 (KTFNPGAGLPTDKKKGGPSAG) are disordered. A Glycyl lysine isopeptide (Lys-Gly) (interchain with G-Cter in SUMO2) cross-link involves residue Lys-221. A disordered region spans residues 222–255 (GLLQSGQIPGRERRSGPSDEGEEEIEDDTVTNGS). 2 positions are modified to phosphoserine: Ser-236 and Ser-255. Acidic residues predominate over residues 240 to 255 (DEGEEEIEDDTVTNGS).

It belongs to the U2 small nuclear ribonucleoprotein A family. In terms of assembly, identified in the spliceosome B complex. Identified in the spliceosome C complex. Found in a pre-mRNA splicing complex with SFRS4, SFRS5, SNRNP70, SNRPA1, SRRM1 and SRRM2. Found in a pre-mRNA exonic splicing enhancer (ESE) complex with SNRNP70, SNRPA1, SRRM1 and TRA2B. Contributes to the binding of stem loop IV of U2 snRNA with SNRPB2.

It is found in the nucleus. Its function is as follows. Involved in pre-mRNA splicing as component of the spliceosome. Associated with sn-RNP U2, where it contributes to the binding of stem loop IV of U2 snRNA. The protein is U2 small nuclear ribonucleoprotein A' (Snrpa1) of Mus musculus (Mouse).